A 234-amino-acid chain; its full sequence is LexA repressor (234 aa).

Residues 26–46 (FDEMKTALELTSKSGIHRLIT) constitute a DNA-binding region (H-T-H motif). Active-site for autocatalytic cleavage activity residues include serine 155 and lysine 193.

It belongs to the peptidase S24 family. In terms of assembly, homodimer.

The enzyme catalyses Hydrolysis of Ala-|-Gly bond in repressor LexA.. In terms of biological role, represses a number of genes involved in the response to DNA damage (SOS response), including recA and lexA. In the presence of single-stranded DNA, RecA interacts with LexA causing an autocatalytic cleavage which disrupts the DNA-binding part of LexA, leading to derepression of the SOS regulon and eventually DNA repair. This chain is LexA repressor, found in Bartonella henselae (strain ATCC 49882 / DSM 28221 / CCUG 30454 / Houston 1) (Rochalimaea henselae).